The chain runs to 319 residues: Ferrochelatase (319 aa).

Positions 193 and 274 each coordinate Fe cation.

Belongs to the ferrochelatase family.

It localises to the cytoplasm. The catalysed reaction is heme b + 2 H(+) = protoporphyrin IX + Fe(2+). The protein operates within porphyrin-containing compound metabolism; protoheme biosynthesis; protoheme from protoporphyrin-IX: step 1/1. Functionally, catalyzes the ferrous insertion into protoporphyrin IX. This chain is Ferrochelatase, found in Actinobacillus pleuropneumoniae serotype 3 (strain JL03).